A 376-amino-acid chain; its full sequence is Penicillin V acylase (376 aa).

A signal peptide spans 1-29; sequence MIKNNKRIKSTVCALSLVALTLGSAVSLA. C30 serves as the catalytic Nucleophile.

It belongs to the peptidase C59 family. As to quaternary structure, homotetramer. Dimer of dimers.

The protein localises to the periplasm. It catalyses the reaction a penicillin + H2O = 6-aminopenicillanate + a carboxylate. Exhibits uncharacteristic kinetic behavior, showing positive cooperativity coupled with substrate inhibition. Penicillin acylase activity is enhanced in the presence of the reducing agent DTT, indicating active sulfhydryl group in the enzyme. Also shows enhanced activity in presence of organic solvents and detergents. Inhibited largely in presence of Ag(+), Hg(2+) and Cd(2+) ions, which have strong affinities for sulfhydryl groups. Activity is also inhibited by bile salts. Catalyzes the hydrolysis of penicillin V to 6-aminopenicillanate (6-APA). Shows high specificity towards penicillin V. Can use other beta-lactam substrates, including penicillin G, ampicillin, cephalexin, cloxacillin and dicloxacillin, but at a rate less than 10% of that of penicillin V. Does not show any activity with glyco- or tauro-conjugated bile salts. The chain is Penicillin V acylase from Pectobacterium atrosepticum (strain SCRI 1043 / ATCC BAA-672) (Erwinia carotovora subsp. atroseptica).